The following is a 639-amino-acid chain: Poly(A)-specific ribonuclease PARN (639 aa).

A divalent metal cation is bound by residues aspartate 28 and glutamate 30. A phosphoserine mark is found at serine 163 and serine 167. Residues 178–245 form the R3H domain; sequence KKFIDQVVEK…ERYIVISKVD (68 aa). Lysine 220 is modified (N6-acetyllysine). Positions 292 and 382 each coordinate a divalent metal cation. Lysine 499 carries the post-translational modification N6-acetyllysine. Serine 530 bears the Phosphoserine mark. Serine 557 carries the post-translational modification Phosphoserine; by MAPKAPK2. The segment at 560–639 is disordered; that stretch reads APSTVGKRNL…ATLFEVPDTW (80 aa). Phosphoserine is present on residues serine 583 and serine 587. Positions 606–615 are enriched in basic residues; the sequence is KKAKKLKRMK. 3 positions are modified to phosphoserine: serine 619, serine 623, and serine 628. The residue at position 631 (threonine 631) is a Phosphothreonine.

It belongs to the CAF1 family. Homodimer. Found in a mRNA decay complex with RENT1, RENT2 and RENT3B. Interacts with KHSRP. Interacts with CELF1/CUGBP1. Interacts with ZC3HAV1 in an RNA-independent manner. Interacts with DHX36. The cofactor is Mg(2+). Post-translationally, phosphorylation by MAPKAPK2, preventing GADD45A mRNA degradation after genotoxic stress. As to expression, ubiquitous.

It localises to the nucleus. Its subcellular location is the cytoplasm. It is found in the nucleolus. The catalysed reaction is Exonucleolytic cleavage of poly(A) to 5'-AMP.. In terms of biological role, 3'-exoribonuclease that has a preference for poly(A) tails of mRNAs, thereby efficiently degrading poly(A) tails. Exonucleolytic degradation of the poly(A) tail is often the first step in the decay of eukaryotic mRNAs and is also used to silence certain maternal mRNAs translationally during oocyte maturation and early embryonic development. Interacts with both the 3'-end poly(A) tail and the 5'-end cap structure during degradation, the interaction with the cap structure being required for an efficient degradation of poly(A) tails. Involved in nonsense-mediated mRNA decay, a critical process of selective degradation of mRNAs that contain premature stop codons. Also involved in degradation of inherently unstable mRNAs that contain AU-rich elements (AREs) in their 3'-UTR, possibly via its interaction with KHSRP. Probably mediates the removal of poly(A) tails of AREs mRNAs, which constitutes the first step of destabilization. Also able to recognize and trim poly(A) tails of microRNAs such as MIR21 and H/ACA box snoRNAs (small nucleolar RNAs) leading to microRNAs degradation or snoRNA increased stability. The chain is Poly(A)-specific ribonuclease PARN (PARN) from Homo sapiens (Human).